Consider the following 157-residue polypeptide: Transcription antitermination protein NusB (157 aa).

It belongs to the NusB family.

In terms of biological role, involved in transcription antitermination. Required for transcription of ribosomal RNA (rRNA) genes. Binds specifically to the boxA antiterminator sequence of the ribosomal RNA (rrn) operons. This is Transcription antitermination protein NusB from Xylella fastidiosa (strain 9a5c).